The primary structure comprises 885 residues: Leucine--tRNA ligase (885 aa).

The 'HIGH' region motif lies at 48-58; sequence PYPSGKLHMGH. Residues 639–643 carry the 'KMSKS' region motif; the sequence is TMSKS. K642 contacts ATP.

Belongs to the class-I aminoacyl-tRNA synthetase family.

The protein localises to the cytoplasm. It catalyses the reaction tRNA(Leu) + L-leucine + ATP = L-leucyl-tRNA(Leu) + AMP + diphosphate. The protein is Leucine--tRNA ligase of Bordetella bronchiseptica (strain ATCC BAA-588 / NCTC 13252 / RB50) (Alcaligenes bronchisepticus).